A 427-amino-acid chain; its full sequence is MRTTMSNLPKELVEDIVSRVPLHCLRAMRLTCKNWNALLESQSFKKMHIRKEEEAARELGENRMIVMMDYNVYLMGIIVNENLSIKSLGKLTCLHGSKQVKISQVFHCEGLLLCILKDDDTKIVVLNPYLGQTRWIQTRKYHRTSEWEGRDVYNYALRYETNSGNRSPKILRFIDDFHHHPENPALRYETYDFDTDLWTTLDVSPHWRIISRCGGVSLNGNTYWGAVERNASAYIGHMICFDFTRGGFGPLIPLPFKARGLVFAPLSSDRAEKIAALFRTSKKVVIWITTKIDATNVTWSNFFTIYISNLERNLSCKSFFTIYISNLERNLSCKSFFIDMEKKVAMVFDKEKGKKVAHNIINIIGEAGCVRKLVLKESGDKSCWPLVCSYVPSTVQIKQHNRGKRQKKVIRKGIDIDMRHDKRIKVD.

One can recognise an F-box domain in the interval 2–47; sequence RTTMSNLPKELVEDIVSRVPLHCLRAMRLTCKNWNALLESQSFKKM.

The protein is Putative F-box protein At4g10740 of Arabidopsis thaliana (Mouse-ear cress).